A 481-amino-acid chain; its full sequence is UDP-N-acetylmuramoylalanine--D-glutamate ligase (481 aa).

108–114 contributes to the ATP binding site; the sequence is GTNGKTS.

It belongs to the MurCDEF family.

The protein localises to the cytoplasm. The catalysed reaction is UDP-N-acetyl-alpha-D-muramoyl-L-alanine + D-glutamate + ATP = UDP-N-acetyl-alpha-D-muramoyl-L-alanyl-D-glutamate + ADP + phosphate + H(+). The protein operates within cell wall biogenesis; peptidoglycan biosynthesis. Its function is as follows. Cell wall formation. Catalyzes the addition of glutamate to the nucleotide precursor UDP-N-acetylmuramoyl-L-alanine (UMA). The polypeptide is UDP-N-acetylmuramoylalanine--D-glutamate ligase (Bifidobacterium longum subsp. infantis (strain ATCC 15697 / DSM 20088 / JCM 1222 / NCTC 11817 / S12)).